Here is a 415-residue protein sequence, read N- to C-terminus: Magnesium-chelatase subunit ChlI, chloroplastic (415 aa).

The N-terminal 67 residues, 1 to 67, are a transit peptide targeting the chloroplast; the sequence is MASAFSPATA…APSATQQEAK (67 aa). 2 disulfide bridges follow: cysteine 93-cysteine 184 and cysteine 345-cysteine 387.

It belongs to the Mg-chelatase subunits D/I family. The magnesium chelatase complex is a heterotrimer consisting of subunits CHLI, CHLD and CHLH.

The protein resides in the plastid. It is found in the chloroplast. It carries out the reaction protoporphyrin IX + Mg(2+) + ATP + H2O = Mg-protoporphyrin IX + ADP + phosphate + 3 H(+). It participates in porphyrin-containing compound metabolism; chlorophyll biosynthesis. Its activity is regulated as follows. Redox regulation; active in reducing conditions, inactive in oxidizing conditions. Thioredoxins f and m mediate the reversible reductive activation of oxidized CHLI. In terms of biological role, involved in chlorophyll biosynthesis. Catalyzes the insertion of magnesium ion into protoporphyrin IX to yield Mg-protoporphyrin IX. The reaction takes place in two steps, with an ATP-dependent activation followed by an ATP-dependent chelation step. The polypeptide is Magnesium-chelatase subunit ChlI, chloroplastic (CHLI) (Oryza sativa subsp. japonica (Rice)).